A 335-amino-acid chain; its full sequence is DNA-directed RNA polymerase subunit alpha (335 aa).

The interval 1–233 is alpha N-terminal domain (alpha-NTD); that stretch reads MTRTANEFLT…QQIAIFVDLQ (233 aa). The interval 247–335 is alpha C-terminal domain (alpha-CTD); sequence VDPILLRPVD…MDDRFAYRSR (89 aa).

The protein belongs to the RNA polymerase alpha chain family. Homodimer. The RNAP catalytic core consists of 2 alpha, 1 beta, 1 beta' and 1 omega subunit. When a sigma factor is associated with the core the holoenzyme is formed, which can initiate transcription.

It catalyses the reaction RNA(n) + a ribonucleoside 5'-triphosphate = RNA(n+1) + diphosphate. In terms of biological role, DNA-dependent RNA polymerase catalyzes the transcription of DNA into RNA using the four ribonucleoside triphosphates as substrates. This is DNA-directed RNA polymerase subunit alpha from Acinetobacter baumannii (strain AB307-0294).